The chain runs to 180 residues: ATP synthase subunit delta, chloroplastic (180 aa).

This sequence belongs to the ATPase delta chain family. In terms of assembly, F-type ATPases have 2 components, F(1) - the catalytic core - and F(0) - the membrane proton channel. F(1) has five subunits: alpha(3), beta(3), gamma(1), delta(1), epsilon(1). CF(0) has four main subunits: a(1), b(1), b'(1) and c(10-14). The alpha and beta chains form an alternating ring which encloses part of the gamma chain. F(1) is attached to F(0) by a central stalk formed by the gamma and epsilon chains, while a peripheral stalk is formed by the delta, b and b' chains.

The protein resides in the plastid. The protein localises to the chloroplast thylakoid membrane. Functionally, f(1)F(0) ATP synthase produces ATP from ADP in the presence of a proton or sodium gradient. F-type ATPases consist of two structural domains, F(1) containing the extramembraneous catalytic core and F(0) containing the membrane proton channel, linked together by a central stalk and a peripheral stalk. During catalysis, ATP synthesis in the catalytic domain of F(1) is coupled via a rotary mechanism of the central stalk subunits to proton translocation. This protein is part of the stalk that links CF(0) to CF(1). It either transmits conformational changes from CF(0) to CF(1) or is implicated in proton conduction. This is ATP synthase subunit delta, chloroplastic from Rhodomonas salina (Cryptomonas salina).